A 467-amino-acid chain; its full sequence is Prenyltransferase GME11375 (467 aa).

Residue glutamate 93 coordinates L-tryptophan. Residues arginine 108, lysine 196, tyrosine 198, lysine 266, tyrosine 268, and tyrosine 436 each coordinate dimethylallyl diphosphate.

It belongs to the tryptophan dimethylallyltransferase family.

It participates in secondary metabolite biosynthesis. Prenyltransferase; part of the gene cluster that mediates the biosynthesis of dibenzodioxocinones such as pestalotiollide B, a novel class of inhibitors against cholesterol ester transfer protein (CEPT). The biosynthesis initiates from condensation of acetate and malonate units catalyzed by the non-reducing PKS pks8/GME11356. Pks8/GME11356 lacks a thioesterase (TE) domain, which is important to the cyclizing of the third ring of atrochrysone carboxylic acid, and the esterase GME11355 might play the role of TE and catalyzes the cyclization reaction of the C ring. The lactamase-like protein GME11357 (or other beta-lactamases in Pestalotiopsis microspora) probably hydrolyzes the thioester bond between the ACP of pks8/GME11356 and the intermediate to release atrochrysone carboxylic acid, which is spontaneously dehydrates to form endocrocin anthrone. Endocrocin anthrone is further converted to emodin via the endocrocin intermediate. Emodin is then oxidized by several enzymes such as the Baeyer-Villiger oxidase GME11358, the oxidoreductase GME11367, the short chain dehydrogenase/reductase GME11373, as well as by other oxidoreductases from the cluster, to modify the A and C rings and open the B ring, and finally yield monodictyphenone. The prenyltransferase GME11375 may catalyze the addition reaction between the C5 side chains and the carbon bone of dibenzodioxocinones. The remaining biochemical reactions to the final product dibenzodioxocinones should be methylation catalyzed by methyltransferase GME11366 and reduction and lactonization reaction catalyzed by a series of oxidordeuctases. This Pestalotiopsis microspora protein is Prenyltransferase GME11375.